The following is a 271-amino-acid chain: 5-deoxy-glucuronate isomerase (271 aa).

This sequence belongs to the isomerase IolB family.

The enzyme catalyses 5-deoxy-D-glucuronate = 5-dehydro-2-deoxy-D-gluconate. Its pathway is polyol metabolism; myo-inositol degradation into acetyl-CoA; acetyl-CoA from myo-inositol: step 4/7. Functionally, involved in the isomerization of 5-deoxy-glucuronate (5DG) to 5-dehydro-2-deoxy-D-gluconate (DKG or 2-deoxy-5-keto-D-gluconate). The chain is 5-deoxy-glucuronate isomerase from Bacillus velezensis (strain DSM 23117 / BGSC 10A6 / LMG 26770 / FZB42) (Bacillus amyloliquefaciens subsp. plantarum).